A 377-amino-acid chain; its full sequence is MKILVDENMPYAETLFSQLGEVILKPGRSLTADDLVDIDALMIRSVTKVNAALISKANKLKFVGTATAGMDHVDQALLKEKGIYFTAAPGCNKVGVAEYVFSVMMVLAQQQGFSVFEQTVGIIGAGQVGSYLQQCLQGIGIKVLINDPFKQEEGDEREFTSLDRLLQEADVITLHTPITRDGKYPTHHLINEEILNSLRADQILINAARGPVVDNQALKRRLQQADGFMAALDVFEFEPEVDMELLPLLAFATPHVAGYGLEGKARGTTMIFNSYCEFIGNELRAHASDLLPTAPVPKVVLDRKWDEATLHTLTQLVYDVRRDDAQFRREIGAPGAFDLMRKEYWDRREYSAVTLVGSAQCRLKPLAKLGFQVEVSQ.

Substrate-binding residues include Ser-45 and Thr-67. NAD(+) is bound by residues 127 to 128 (QV), Asp-147, and Thr-176. Arg-209 is a catalytic residue. Asp-233 is an NAD(+) binding site. The active site involves Glu-238. His-255 (proton donor) is an active-site residue. Gly-258 contributes to the NAD(+) binding site. Substrate is bound at residue Tyr-259.

This sequence belongs to the D-isomer specific 2-hydroxyacid dehydrogenase family. PdxB subfamily. Homodimer.

It localises to the cytoplasm. It catalyses the reaction 4-phospho-D-erythronate + NAD(+) = (R)-3-hydroxy-2-oxo-4-phosphooxybutanoate + NADH + H(+). It functions in the pathway cofactor biosynthesis; pyridoxine 5'-phosphate biosynthesis; pyridoxine 5'-phosphate from D-erythrose 4-phosphate: step 2/5. Catalyzes the oxidation of erythronate-4-phosphate to 3-hydroxy-2-oxo-4-phosphonooxybutanoate. This is Erythronate-4-phosphate dehydrogenase from Vibrio vulnificus (strain CMCP6).